We begin with the raw amino-acid sequence, 54 residues long: Toxin AnmTx Cj 1c-1 (54 aa).

Residues 1 to 7 (MLNKRGV) form the signal peptide. 3 cysteine pairs are disulfide-bonded: C9/C50, C11/C41, and C33/C51. E53 carries the post-translational modification Glutamic acid 1-amide.

The protein belongs to the sea anemone sodium channel inhibitory toxin family. Type I subfamily. Contains 3 disulfide bonds.

Its subcellular location is the secreted. It localises to the nematocyst. Functionally, in vivo, induces marked paralysis on shrimps (C.multidentata) at 10-20 seconds after injection and a weak toxicity when injected into insect larvae (M.domestica). This chain is Toxin AnmTx Cj 1c-1, found in Epiactis japonica (Sea anemone).